The primary structure comprises 397 residues: Tryptophan synthase beta chain (397 aa).

Lys86 bears the N6-(pyridoxal phosphate)lysine mark.

Belongs to the TrpB family. As to quaternary structure, tetramer of two alpha and two beta chains. The cofactor is pyridoxal 5'-phosphate.

The catalysed reaction is (1S,2R)-1-C-(indol-3-yl)glycerol 3-phosphate + L-serine = D-glyceraldehyde 3-phosphate + L-tryptophan + H2O. Its pathway is amino-acid biosynthesis; L-tryptophan biosynthesis; L-tryptophan from chorismate: step 5/5. In terms of biological role, the beta subunit is responsible for the synthesis of L-tryptophan from indole and L-serine. This is Tryptophan synthase beta chain from Aeromonas hydrophila subsp. hydrophila (strain ATCC 7966 / DSM 30187 / BCRC 13018 / CCUG 14551 / JCM 1027 / KCTC 2358 / NCIMB 9240 / NCTC 8049).